A 185-amino-acid chain; its full sequence is uncharacterized protein (185 aa).

This sequence belongs to the PIGL family.

This is an uncharacterized protein from Escherichia coli (strain K12).